The primary structure comprises 567 residues: Potassium-transporting ATPase potassium-binding subunit (567 aa).

Transmembrane regions (helical) follow at residues methionine 3–leucine 23, leucine 64–valine 84, glycine 136–isoleucine 156, leucine 179–proline 199, valine 220–phenylalanine 240, leucine 254–phenylalanine 274, tryptophan 285–alanine 305, phenylalanine 330–valine 350, isoleucine 374–isoleucine 394, alanine 420–valine 440, leucine 488–glycine 508, and glycine 527–phenylalanine 547.

It belongs to the KdpA family. The system is composed of three essential subunits: KdpA, KdpB and KdpC.

It localises to the cell inner membrane. In terms of biological role, part of the high-affinity ATP-driven potassium transport (or Kdp) system, which catalyzes the hydrolysis of ATP coupled with the electrogenic transport of potassium into the cytoplasm. This subunit binds the periplasmic potassium ions and delivers the ions to the membrane domain of KdpB through an intramembrane tunnel. This is Potassium-transporting ATPase potassium-binding subunit from Bradyrhizobium diazoefficiens (strain JCM 10833 / BCRC 13528 / IAM 13628 / NBRC 14792 / USDA 110).